The primary structure comprises 214 residues: Octanoyltransferase (214 aa).

The BPL/LPL catalytic domain occupies 32–207; it reads EDTLDEIWLV…NLLALLNHPP (176 aa). Substrate contacts are provided by residues 71–78, 138–140, and 151–153; these read RGGQVTYH, SLG, and GLA. Residue C169 is the Acyl-thioester intermediate of the active site.

It belongs to the LipB family.

It is found in the cytoplasm. The enzyme catalyses octanoyl-[ACP] + L-lysyl-[protein] = N(6)-octanoyl-L-lysyl-[protein] + holo-[ACP] + H(+). It functions in the pathway protein modification; protein lipoylation via endogenous pathway; protein N(6)-(lipoyl)lysine from octanoyl-[acyl-carrier-protein]: step 1/2. Catalyzes the transfer of endogenously produced octanoic acid from octanoyl-acyl-carrier-protein onto the lipoyl domains of lipoate-dependent enzymes. Lipoyl-ACP can also act as a substrate although octanoyl-ACP is likely to be the physiological substrate. This chain is Octanoyltransferase, found in Klebsiella pneumoniae subsp. pneumoniae (strain ATCC 700721 / MGH 78578).